A 255-amino-acid polypeptide reads, in one-letter code: Zinc import ATP-binding protein ZnuC (255 aa).

The 216-residue stretch at 4–219 (VDVDGLSLRY…PEYRALFGTG (216 aa)) folds into the ABC transporter domain. Residue 36 to 43 (GPNGSGKT) coordinates ATP. Positions 234 to 255 (EHDHHDGCAHGQATEDRTEAAE) are disordered.

Belongs to the ABC transporter superfamily. Zinc importer (TC 3.A.1.15.5) family. In terms of assembly, the complex is composed of two ATP-binding proteins (ZnuC), two transmembrane proteins (ZnuB) and a solute-binding protein (ZnuA).

The protein localises to the cell inner membrane. The catalysed reaction is Zn(2+)(out) + ATP(in) + H2O(in) = Zn(2+)(in) + ADP(in) + phosphate(in) + H(+)(in). Its function is as follows. Part of the ABC transporter complex ZnuABC involved in zinc import. Responsible for energy coupling to the transport system. This Roseobacter denitrificans (strain ATCC 33942 / OCh 114) (Erythrobacter sp. (strain OCh 114)) protein is Zinc import ATP-binding protein ZnuC.